The primary structure comprises 316 residues: Conjugated bile acid hydrolase (316 aa).

Residue C2 is the Nucleophile of the active site. The deoxycholate site is built by C2 and R18. Taurine is bound at residue N81.

This sequence belongs to the peptidase C59 family.

The enzyme catalyses cholate + taurine = taurocholate + H2O. It carries out the reaction taurochenodeoxycholate + H2O = chenodeoxycholate + taurine. It catalyses the reaction taurodeoxycholate + H2O = deoxycholate + taurine. The catalysed reaction is glycocholate + H2O = cholate + glycine. The enzyme catalyses glycodeoxycholate + H2O = deoxycholate + glycine. It participates in lipid metabolism; bile acid biosynthesis. Functionally, bile salt hydrolase that catalyzes the deconjugation of glycine- and taurine-linked bile salts, which occurs naturally in the intestines of humans, releasing amino acid residues and deconjugated bile salts (bile acids). Can hydrolyze the amide bond in the bile salts taurocholate (TCA), taurodeoxycholate (TDCA), taurochenodeoxycholate (TCDCA), glycocholate (GCA) and glycodeoxycholate (GDCA). Shows highest activity toward the taurine-conjugated bile salts TCA and TCDCA. The activity toward the other three substrates (TDCA, GCA and GDCA) is relatively low. This enzyme likely contributes to bile salt resistance of the strain and may be associated with survival capability of strain JCM1131 within the human intestine by bile detoxification. The sequence is that of Conjugated bile acid hydrolase from Lactobacillus gasseri (strain ATCC 33323 / DSM 20243 / BCRC 14619 / CIP 102991 / JCM 1131 / KCTC 3163 / NCIMB 11718 / NCTC 13722 / AM63).